A 129-amino-acid polypeptide reads, in one-letter code: Small ribosomal subunit protein uS9 (129 aa).

Residues 107-129 are disordered; sequence SRVVERKKPGKKKARRSPQFSKR. Over residues 114–129 the composition is skewed to basic residues; the sequence is KPGKKKARRSPQFSKR.

This sequence belongs to the universal ribosomal protein uS9 family.

This Sulfurovum sp. (strain NBC37-1) protein is Small ribosomal subunit protein uS9.